The primary structure comprises 244 residues: Glucosamine-6-phosphate deaminase (244 aa).

The Proton acceptor; for enolization step role is filled by D67. N136 (for ring-opening step) is an active-site residue. The Proton acceptor; for ring-opening step role is filled by H138. E143 functions as the For ring-opening step in the catalytic mechanism.

This sequence belongs to the glucosamine/galactosamine-6-phosphate isomerase family. NagB subfamily.

The catalysed reaction is alpha-D-glucosamine 6-phosphate + H2O = beta-D-fructose 6-phosphate + NH4(+). It functions in the pathway amino-sugar metabolism; N-acetylneuraminate degradation; D-fructose 6-phosphate from N-acetylneuraminate: step 5/5. Catalyzes the reversible isomerization-deamination of glucosamine 6-phosphate (GlcN6P) to form fructose 6-phosphate (Fru6P) and ammonium ion. This is Glucosamine-6-phosphate deaminase from Clostridium botulinum (strain Loch Maree / Type A3).